The chain runs to 451 residues: uncharacterized protein (451 aa).

The TRAM domain maps to 1 to 59 (MLHKNDIIETEISDISHEGMGIAKVDGFVFFVENALPGEIIKMRVLKLRKRIGYGKVEE). Residues Q283, Y312, E333, and D381 each contribute to the S-adenosyl-L-methionine site. The active-site Nucleophile is the C408.

The protein belongs to the class I-like SAM-binding methyltransferase superfamily. RNA M5U methyltransferase family.

This is an uncharacterized protein from Streptococcus agalactiae serotype V (strain ATCC BAA-611 / 2603 V/R).